The following is a 205-amino-acid chain: MKKELILKALKLRDMGFPSGDIAEELNISVKTALYLTLNGEELLKAGETPKEDSEKLDIFLEWDNVRASSRRLRNISKIICDMLSDVEFDGIVGISSGGVPLATLISDELDKNFSIYVPKKHVHTEKEKTTGFIGQNMSSIVGKDVIIVDDVMTSGNSVKETIKYLKGIANPKKVFVVMDKSGIDEIDGVKIEHLFRTGVVDIKK.

This sequence belongs to the purine/pyrimidine phosphoribosyltransferase family. GfcR subfamily.

This is Transcriptional regulator GfcR from Methanococcus maripaludis (strain C5 / ATCC BAA-1333).